Here is a 364-residue protein sequence, read N- to C-terminus: Chorismate synthase (364 aa).

Arg48 provides a ligand contact to NADP(+). FMN contacts are provided by residues 126 to 128, Gly288, 303 to 307, and Arg329; these read RSS and KPIAS.

It belongs to the chorismate synthase family. As to quaternary structure, homotetramer. The cofactor is FMNH2.

The enzyme catalyses 5-O-(1-carboxyvinyl)-3-phosphoshikimate = chorismate + phosphate. It participates in metabolic intermediate biosynthesis; chorismate biosynthesis; chorismate from D-erythrose 4-phosphate and phosphoenolpyruvate: step 7/7. Catalyzes the anti-1,4-elimination of the C-3 phosphate and the C-6 proR hydrogen from 5-enolpyruvylshikimate-3-phosphate (EPSP) to yield chorismate, which is the branch point compound that serves as the starting substrate for the three terminal pathways of aromatic amino acid biosynthesis. This reaction introduces a second double bond into the aromatic ring system. The protein is Chorismate synthase of Desulfovibrio desulfuricans (strain ATCC 27774 / DSM 6949 / MB).